Here is a 427-residue protein sequence, read N- to C-terminus: MNRNEILFDRAKAIIPGGVNSPVRAFGSVGGVPRFIKKAEGAYVWDENGTRYTDYVGSWGPAIVGHAHPEVVEAVREAALGGLSFGAPTEGEIAIAEQIAKIMPSVERLRLVSSGTEATMTAIRLARGFTGRDKIIKFEGCYHGHSDSLLVKAGSGLLTFGNPSSAGVPADFTKHTLVLEYNNIAQLEEAFAQSGNDIACVILEPFVGNMNLVRPTEAFVKALRELTEKHGAVLIYDEVMTGFRVALGGAQSLHGIMPDLTTMGKVIGGGMPLAAFGGRKDIMECISPLGGVYQAGTLSGNPIAVAAGLKTLEIIRREGFYENLTARTEQLVQGFRTAADAAGIEFTADSVGGMFGLYFAAHAPRNYADMARSNIDAFKRFFHGMLDRGIAFGPSAYEAGFVSAAHTPELIDETVAVAVEVFKAMAA.

Lysine 265 carries the post-translational modification N6-(pyridoxal phosphate)lysine.

Belongs to the class-III pyridoxal-phosphate-dependent aminotransferase family. HemL subfamily. Homodimer. The cofactor is pyridoxal 5'-phosphate.

It is found in the cytoplasm. It carries out the reaction (S)-4-amino-5-oxopentanoate = 5-aminolevulinate. The protein operates within porphyrin-containing compound metabolism; protoporphyrin-IX biosynthesis; 5-aminolevulinate from L-glutamyl-tRNA(Glu): step 2/2. This Neisseria meningitidis serogroup C (strain 053442) protein is Glutamate-1-semialdehyde 2,1-aminomutase.